The chain runs to 621 residues: Chaperone protein DnaK (621 aa).

Thr175 carries the post-translational modification Phosphothreonine; by autocatalysis. The span at 499-516 shows a compositional bias: basic and acidic residues; sequence EAHEADDKKRKEDAETRN. Disordered regions lie at residues 499 to 520 and 583 to 621; these read EAHE…NAEN and AQQG…KDNK. Low complexity predominate over residues 583-602; it reads AQQGAEGAAGAADSGSANNG. Over residues 603-621 the composition is skewed to acidic residues; that stretch reads GDDDVVDAEVVDDDDKDNK.

The protein belongs to the heat shock protein 70 family.

In terms of biological role, acts as a chaperone. The sequence is that of Chaperone protein DnaK from Bifidobacterium animalis subsp. lactis (strain AD011).